Reading from the N-terminus, the 272-residue chain is Tryptophan synthase alpha chain (272 aa).

Active-site proton acceptor residues include glutamate 49 and aspartate 60.

The protein belongs to the TrpA family. As to quaternary structure, tetramer of two alpha and two beta chains.

It carries out the reaction (1S,2R)-1-C-(indol-3-yl)glycerol 3-phosphate + L-serine = D-glyceraldehyde 3-phosphate + L-tryptophan + H2O. Its pathway is amino-acid biosynthesis; L-tryptophan biosynthesis; L-tryptophan from chorismate: step 5/5. Its function is as follows. The alpha subunit is responsible for the aldol cleavage of indoleglycerol phosphate to indole and glyceraldehyde 3-phosphate. The protein is Tryptophan synthase alpha chain of Methylibium petroleiphilum (strain ATCC BAA-1232 / LMG 22953 / PM1).